The sequence spans 948 residues: Coiled-coil domain-containing protein 66 (948 aa).

Phosphothreonine is present on residues Thr115 and Thr121. Phosphoserine is present on Ser369. Residues 458-499 (DRRRQKQLEHQKAITAQVEEKRRKKQLEEEQRKKEEQEEELR) form a disordered region. Residues 467–558 (HQKAITAQVE…EQRIRELAQK (92 aa)) are a coiled coil. The tract at residues 570-948 (GVDTIQMEYN…NQEESFGSSF (379 aa)) is mediates localization to cilia, centrosomes and spindle microtubules and the interaction with PCM1, CEP290, CEP104 and CSPP1. Residue Ser606 is modified to Phosphoserine. 2 disordered regions span residues 690 to 713 (QTKHMKKYPKRPDWNINKPPKRYI) and 788 to 808 (SFSKERSPSSPVPVVKNRTQQ).

Homodimer; disulfide-linked. Interacts with CEP290. Interacts with PCM1. Interacts with ARMC9, TOGARAM1, CSPP1 and CEP104. Interacts with CDK5RAP2, CEP152, CEP192, TBG1 and PRC1. In terms of tissue distribution, widely expressed (at protein level). Expressed in retina, mainly in photoreceptors but also in outer plexiform and ganglion cell layers (at protein level).

Its subcellular location is the cytoplasm. The protein localises to the cytoskeleton. It is found in the microtubule organizing center. It localises to the centrosome. The protein resides in the centriolar satellite. Its subcellular location is the cell projection. The protein localises to the cilium. It is found in the cilium basal body. It localises to the cilium axoneme. The protein resides in the photoreceptor inner segment. Its subcellular location is the photoreceptor outer segment. The protein localises to the spindle. It is found in the midbody. Microtubule-binding protein required for ciliogenesis. May function in ciliogenesis by mediating the transport of proteins like BBS4 to the cilium, but also through the organization of the centriolar satellites. Required for the assembly of signaling-competent cilia with proper structure and length. Mediates this function in part by regulating transition zone assembly and basal body recruitment of the IFT-B complex. Cooperates with the ciliopathy proteins CSPP1 and CEP104 during cilium length regulation. Plays two important roles during cell division. First, is required for mitotic progression via regulation of spindle assembly, organization and orientation, levels of spindle microtubules (MTs), kinetochore-fiber integrity, and chromosome alignment. Second, functions during cytokinesis in part by regulating assembly and organization of central spindle and midbody MTs. Plays a role in retina morphogenesis and/or homeostasis. The protein is Coiled-coil domain-containing protein 66 of Homo sapiens (Human).